The primary structure comprises 360 residues: Ribosomal RNA large subunit methyltransferase M (360 aa).

Residues Ser187, 220 to 223 (CPGG), Asp239, Asp259, and Asp276 contribute to the S-adenosyl-L-methionine site. Lys305 (proton acceptor) is an active-site residue.

The protein belongs to the class I-like SAM-binding methyltransferase superfamily. RNA methyltransferase RlmE family. RlmM subfamily. Monomer.

It is found in the cytoplasm. It catalyses the reaction cytidine(2498) in 23S rRNA + S-adenosyl-L-methionine = 2'-O-methylcytidine(2498) in 23S rRNA + S-adenosyl-L-homocysteine + H(+). Its function is as follows. Catalyzes the 2'-O-methylation at nucleotide C2498 in 23S rRNA. The polypeptide is Ribosomal RNA large subunit methyltransferase M (Shewanella sediminis (strain HAW-EB3)).